A 458-amino-acid chain; its full sequence is Photosystem II CP43 reaction center protein (458 aa).

5 helical membrane-spanning segments follow: residues 54–78, 119–140, 163–185, 240–260, and 276–297; these read LFEV…PHLA, LRGP…KDKN, KAMF…RVIT, RPFN…LSYS, and WFNN…ASQA. Glutamate 352 is a binding site for [CaMn4O5] cluster. Residues 432-456 traverse the membrane as a helical segment; it reads RARAAAAGFEKGIDRKTEPVLSMSD.

The protein belongs to the PsbB/PsbC family. PsbC subfamily. PSII is composed of 1 copy each of membrane proteins PsbA, PsbB, PsbC, PsbD, PsbE, PsbF, PsbH, PsbI, PsbJ, PsbK, PsbL, PsbM, PsbT, PsbX, PsbY, PsbZ, Psb30/Ycf12, peripheral proteins PsbO, CyanoQ (PsbQ), PsbU, PsbV and a large number of cofactors. It forms dimeric complexes. Binds multiple chlorophylls and provides some of the ligands for the Ca-4Mn-5O cluster of the oxygen-evolving complex. It may also provide a ligand for a Cl- that is required for oxygen evolution. PSII binds additional chlorophylls, carotenoids and specific lipids. is required as a cofactor.

It localises to the cellular thylakoid membrane. In terms of biological role, one of the components of the core complex of photosystem II (PSII). It binds chlorophyll and helps catalyze the primary light-induced photochemical processes of PSII. PSII is a light-driven water:plastoquinone oxidoreductase, using light energy to abstract electrons from H(2)O, generating O(2) and a proton gradient subsequently used for ATP formation. This chain is Photosystem II CP43 reaction center protein, found in Prochlorothrix hollandica.